The chain runs to 488 residues: Probable apyrase 5 (488 aa).

A disordered region spans residues 1–26 (MDALKVQILPDNQSSPSSTHMLTKPK). Topologically, residues 1–32 (MDALKVQILPDNQSSPSSTHMLTKPKSKKATK) are cytoplasmic. A compositionally biased stretch (polar residues) spans 10 to 21 (PDNQSSPSSTHM). Residues 33–53 (SIAMLIVASLAITLGLLFVFS) form a helical; Signal-anchor for type II membrane protein membrane-spanning segment. Topologically, residues 54-488 (SNSVMFSASF…GKSRKMIGFK (435 aa)) are extracellular. ATP is bound at residue 73–83 (VIIDAGSSGTR). Glu196 (proton acceptor) is an active-site residue. 220 to 230 (GIVELGGASAQ) serves as a coordination point for ATP. A glycan (N-linked (GlcNAc...) asparagine) is linked at Asn251.

This sequence belongs to the GDA1/CD39 NTPase family. The cofactor is Ca(2+). Highly expressed in young rosette leaves but only weakly in roots.

The protein localises to the membrane. The catalysed reaction is a ribonucleoside 5'-triphosphate + 2 H2O = a ribonucleoside 5'-phosphate + 2 phosphate + 2 H(+). Its function is as follows. Catalyzes the hydrolysis of phosphoanhydride bonds of nucleoside tri- and di-phosphates. This is Probable apyrase 5 (APY5) from Arabidopsis thaliana (Mouse-ear cress).